The sequence spans 348 residues: Methylthioribose-1-phosphate isomerase (348 aa).

Residues 46–48 (RGA), arginine 88, and glutamine 194 each bind substrate. Aspartate 235 (proton donor) is an active-site residue. Substrate is bound at residue 245-246 (NK).

This sequence belongs to the eIF-2B alpha/beta/delta subunits family. MtnA subfamily.

The enzyme catalyses 5-(methylsulfanyl)-alpha-D-ribose 1-phosphate = 5-(methylsulfanyl)-D-ribulose 1-phosphate. The protein operates within amino-acid biosynthesis; L-methionine biosynthesis via salvage pathway; L-methionine from S-methyl-5-thio-alpha-D-ribose 1-phosphate: step 1/6. Functionally, catalyzes the interconversion of methylthioribose-1-phosphate (MTR-1-P) into methylthioribulose-1-phosphate (MTRu-1-P). In Desulforudis audaxviator (strain MP104C), this protein is Methylthioribose-1-phosphate isomerase.